A 747-amino-acid polypeptide reads, in one-letter code: AMP deaminase 1 (747 aa).

Residue Thr-81 is modified to Phosphothreonine. Ser-85 is modified (phosphoserine). Tyr-216 is modified (phosphotyrosine). The Zn(2+) site is built by His-303 and His-305. Substrate-binding positions include His-305 and Lys-374–Tyr-379. Ser-441 is modified (phosphoserine). His-572 is a Zn(2+) binding site. Glu-575 contributes to the substrate binding site. His-594 serves as the catalytic Proton acceptor. Residue Asp-649 participates in Zn(2+) binding. Residue Asp-650–Gln-653 coordinates substrate.

Belongs to the metallo-dependent hydrolases superfamily. Adenosine and AMP deaminases family. Homotetramer. Requires Zn(2+) as cofactor.

The enzyme catalyses AMP + H2O + H(+) = IMP + NH4(+). It participates in purine metabolism; IMP biosynthesis via salvage pathway; IMP from AMP: step 1/1. Functionally, AMP deaminase plays a critical role in energy metabolism. This chain is AMP deaminase 1, found in Homo sapiens (Human).